A 601-amino-acid polypeptide reads, in one-letter code: Glutathione-regulated potassium-efflux system protein KefB (601 aa).

The next 13 membrane-spanning stretches (helical) occupy residues 4-24, 29-49, 55-75, 87-107, 115-135, 152-172, 177-197, 207-227, 230-250, 268-288, 291-311, 326-346, and 356-376; these read SDLL…VPLA, IGAV…GLGF, EILH…GLEL, IFGV…GLLM, AAVV…LQLM, VLLF…LLAG, HVNW…LIGG, FIAS…LVLG, LFME…GVLL, GLLL…GVLY, LLWV…VLYL, FAGV…LPAS, and ALLL…MKGI. Positions 400 to 519 constitute an RCK N-terminal domain; the sequence is KPQVIIVGFG…AGVTQFSRET (120 aa).

This sequence belongs to the monovalent cation:proton antiporter 2 (CPA2) transporter (TC 2.A.37) family. KefB subfamily. As to quaternary structure, interacts with the regulatory subunit KefG.

It localises to the cell inner membrane. In terms of biological role, pore-forming subunit of a potassium efflux system that confers protection against electrophiles. Catalyzes K(+)/H(+) antiport. This chain is Glutathione-regulated potassium-efflux system protein KefB, found in Klebsiella pneumoniae (strain 342).